A 260-amino-acid chain; its full sequence is 4-hydroxy-tetrahydrodipicolinate reductase (260 aa).

NAD(+)-binding positions include 12-17 (GFRGKM), 92-94 (GTT), and 118-121 (APNF). The Proton donor/acceptor role is filled by His-148. His-149 contacts (S)-2,3,4,5-tetrahydrodipicolinate. Lys-152 serves as the catalytic Proton donor. 158-159 (GT) contacts (S)-2,3,4,5-tetrahydrodipicolinate.

The protein belongs to the DapB family.

It is found in the cytoplasm. It catalyses the reaction (S)-2,3,4,5-tetrahydrodipicolinate + NAD(+) + H2O = (2S,4S)-4-hydroxy-2,3,4,5-tetrahydrodipicolinate + NADH + H(+). The catalysed reaction is (S)-2,3,4,5-tetrahydrodipicolinate + NADP(+) + H2O = (2S,4S)-4-hydroxy-2,3,4,5-tetrahydrodipicolinate + NADPH + H(+). The protein operates within amino-acid biosynthesis; L-lysine biosynthesis via DAP pathway; (S)-tetrahydrodipicolinate from L-aspartate: step 4/4. Catalyzes the conversion of 4-hydroxy-tetrahydrodipicolinate (HTPA) to tetrahydrodipicolinate. This chain is 4-hydroxy-tetrahydrodipicolinate reductase, found in Lactococcus lactis subsp. cremoris (strain SK11).